Reading from the N-terminus, the 346-residue chain is Mannonate dehydratase (346 aa).

This sequence belongs to the mannonate dehydratase family. Fe(2+) serves as cofactor. Requires Mn(2+) as cofactor.

It catalyses the reaction D-mannonate = 2-dehydro-3-deoxy-D-gluconate + H2O. It functions in the pathway carbohydrate metabolism; pentose and glucuronate interconversion. Catalyzes the dehydration of D-mannonate. The protein is Mannonate dehydratase of Cupriavidus taiwanensis (strain DSM 17343 / BCRC 17206 / CCUG 44338 / CIP 107171 / LMG 19424 / R1) (Ralstonia taiwanensis (strain LMG 19424)).